We begin with the raw amino-acid sequence, 206 residues long: Small ribosomal subunit protein uS4 (206 aa).

The tract at residues 18-46 (NIWGRPKSPVNRREYGPGQHGQRRKQKMS) is disordered. Positions 94–154 (RRLDAVVYRA…EKSRQMAALL (61 aa)) constitute an S4 RNA-binding domain.

It belongs to the universal ribosomal protein uS4 family. Part of the 30S ribosomal subunit. Contacts protein S5. The interaction surface between S4 and S5 is involved in control of translational fidelity.

Functionally, one of the primary rRNA binding proteins, it binds directly to 16S rRNA where it nucleates assembly of the body of the 30S subunit. Its function is as follows. With S5 and S12 plays an important role in translational accuracy. The polypeptide is Small ribosomal subunit protein uS4 (Dinoroseobacter shibae (strain DSM 16493 / NCIMB 14021 / DFL 12)).